Reading from the N-terminus, the 270-residue chain is 4-hydroxy-tetrahydrodipicolinate reductase (270 aa).

NAD(+)-binding positions include 11–16 and Glu37; that span reads GASGRM. Arg38 contributes to the NADP(+) binding site. Residues 101-103 and 125-128 contribute to the NAD(+) site; these read GTT and APNM. The active-site Proton donor/acceptor is the His158. Residue His159 coordinates (S)-2,3,4,5-tetrahydrodipicolinate. Lys162 acts as the Proton donor in catalysis. 168-169 contacts (S)-2,3,4,5-tetrahydrodipicolinate; that stretch reads GT.

The protein belongs to the DapB family.

The protein resides in the cytoplasm. The enzyme catalyses (S)-2,3,4,5-tetrahydrodipicolinate + NAD(+) + H2O = (2S,4S)-4-hydroxy-2,3,4,5-tetrahydrodipicolinate + NADH + H(+). It carries out the reaction (S)-2,3,4,5-tetrahydrodipicolinate + NADP(+) + H2O = (2S,4S)-4-hydroxy-2,3,4,5-tetrahydrodipicolinate + NADPH + H(+). It functions in the pathway amino-acid biosynthesis; L-lysine biosynthesis via DAP pathway; (S)-tetrahydrodipicolinate from L-aspartate: step 4/4. Its function is as follows. Catalyzes the conversion of 4-hydroxy-tetrahydrodipicolinate (HTPA) to tetrahydrodipicolinate. The protein is 4-hydroxy-tetrahydrodipicolinate reductase of Shewanella frigidimarina (strain NCIMB 400).